The chain runs to 95 residues: Putative septation protein SpoVG (95 aa).

It belongs to the SpoVG family.

Could be involved in septation. The chain is Putative septation protein SpoVG from Clostridium acetobutylicum (strain ATCC 824 / DSM 792 / JCM 1419 / IAM 19013 / LMG 5710 / NBRC 13948 / NRRL B-527 / VKM B-1787 / 2291 / W).